A 439-amino-acid chain; its full sequence is Serine/threonine-protein kinase 2 (439 aa).

A Protein kinase domain is found at 87–439 (NDDFYHISTG…IFSDWINGRN (353 aa)). Residues 93-101 (ISTGGYGIV) and lysine 117 contribute to the ATP site. The active-site Proton acceptor is the aspartate 307.

The protein belongs to the protein kinase superfamily. Ser/Thr protein kinase family. In terms of processing, phosphorylated in vivo. Autophosphorylated in vitro.

The protein localises to the host endoplasmic reticulum. The protein resides in the host endoplasmic reticulum-Golgi intermediate compartment. The catalysed reaction is L-seryl-[protein] + ATP = O-phospho-L-seryl-[protein] + ADP + H(+). The enzyme catalyses L-threonyl-[protein] + ATP = O-phospho-L-threonyl-[protein] + ADP + H(+). Essential serine-protein kinase involved in the early stage of virion morphogenesis. This chain is Serine/threonine-protein kinase 2 (OPG054), found in Monkeypox virus.